The sequence spans 26 residues: Omega-conotoxin CVIC (26 aa).

Cystine bridges form between cysteine 1-cysteine 16, cysteine 8-cysteine 20, and cysteine 15-cysteine 26. Cysteine amide is present on cysteine 26.

This sequence belongs to the conotoxin O1 superfamily. In terms of tissue distribution, expressed by the venom duct.

The protein resides in the secreted. Functionally, omega-conotoxins act at presynaptic membranes, they bind and block voltage-gated calcium channels (Cav). This toxin blocks N-, P- and Q-type calcium channels. The sequence is that of Omega-conotoxin CVIC from Conus catus (Cat cone).